The following is a 379-amino-acid chain: Cobalt-precorrin-5B C(1)-methyltransferase (379 aa).

It belongs to the CbiD family.

It catalyses the reaction Co-precorrin-5B + S-adenosyl-L-methionine = Co-precorrin-6A + S-adenosyl-L-homocysteine. Its pathway is cofactor biosynthesis; adenosylcobalamin biosynthesis; cob(II)yrinate a,c-diamide from sirohydrochlorin (anaerobic route): step 6/10. Catalyzes the methylation of C-1 in cobalt-precorrin-5B to form cobalt-precorrin-6A. The protein is Cobalt-precorrin-5B C(1)-methyltransferase of Salmonella typhi.